The sequence spans 79 residues: Exodeoxyribonuclease 7 small subunit (79 aa).

This sequence belongs to the XseB family. As to quaternary structure, heterooligomer composed of large and small subunits.

It localises to the cytoplasm. It carries out the reaction Exonucleolytic cleavage in either 5'- to 3'- or 3'- to 5'-direction to yield nucleoside 5'-phosphates.. In terms of biological role, bidirectionally degrades single-stranded DNA into large acid-insoluble oligonucleotides, which are then degraded further into small acid-soluble oligonucleotides. This is Exodeoxyribonuclease 7 small subunit from Lactococcus lactis subsp. cremoris (strain SK11).